The primary structure comprises 647 residues: DNA ligase (647 aa).

NAD(+) contacts are provided by residues 30-34 (DEEYD), 79-80 (SM), and Glu105. The active-site N6-AMP-lysine intermediate is Lys107. Residues Arg128, Glu162, and Lys301 each coordinate NAD(+). Residues Cys395, Cys398, Cys411, and Cys416 each coordinate Zn(2+). One can recognise a BRCT domain in the interval 570 to 647 (KSDGVIFGKT…ESAFNELVKE (78 aa)).

The protein belongs to the NAD-dependent DNA ligase family. LigA subfamily. The cofactor is Mg(2+). Mn(2+) is required as a cofactor.

The enzyme catalyses NAD(+) + (deoxyribonucleotide)n-3'-hydroxyl + 5'-phospho-(deoxyribonucleotide)m = (deoxyribonucleotide)n+m + AMP + beta-nicotinamide D-nucleotide.. In terms of biological role, DNA ligase that catalyzes the formation of phosphodiester linkages between 5'-phosphoryl and 3'-hydroxyl groups in double-stranded DNA using NAD as a coenzyme and as the energy source for the reaction. It is essential for DNA replication and repair of damaged DNA. The polypeptide is DNA ligase (Campylobacter jejuni subsp. jejuni serotype O:6 (strain 81116 / NCTC 11828)).